The sequence spans 435 residues: E3 ubiquitin-protein ligase RING1 (435 aa).

The RING-type zinc-finger motif lies at 46-86 (CPICLDMLKKTMTTKECLHRFCSDCIVTALRSGNKECPTCR). Residues 144–322 (KLQSQNRPQR…TEGEGNGELG (179 aa)) are disordered. The segment covering 157–170 (KGGGGGGGGGGNGN) has biased composition (gly residues). 4 stretches are compositionally biased toward low complexity: residues 171 to 188 (GAAN…TAVG), 202 to 211 (SNDSNSNTNS), 222 to 251 (SGTS…TSAT), and 259 to 278 (SNPP…SSSS). The residue at position 202 (serine 202) is a Phosphoserine. The residue at position 266 (serine 266) is a Phosphoserine. Threonine 267 is subject to Phosphothreonine. Serine 269 is modified (phosphoserine). Residues 309–322 (SNIDTEGEGNGELG) are compositionally biased toward acidic residues.

As to quaternary structure, interacts with ORD. Component of PRC1 complex, which contains many PcG proteins like Pc, ph, Scm, Psc, Sce and also chromatin remodeling proteins such as histone deacetylases. This complex is distinct from the Esc/E(z) complex, at least composed of esc, E(z), Su(z)12, HDAC1/Rpd3 and Caf1-55. The two complexes however cooperate and interact together during the first 3 hours of development to establish PcG silencing. Ubiquitously expressed in syncytial blastoderm embryos. Ubiquitously expressed until stage 11. Then, it is only expressed in the neuroectoderm. Later in embryonic development, it is only expressed in the CNS. In larvae, it is expressed in all imaginal disks. Expressed in the male and female gonads.

It localises to the nucleus. Its subcellular location is the chromosome. The catalysed reaction is S-ubiquitinyl-[E2 ubiquitin-conjugating enzyme]-L-cysteine + [acceptor protein]-L-lysine = [E2 ubiquitin-conjugating enzyme]-L-cysteine + N(6)-ubiquitinyl-[acceptor protein]-L-lysine.. Its pathway is protein modification; protein ubiquitination. Its function is as follows. E3 ubiquitin-protein ligase that mediates monoubiquitination of 'Lys-118' of histone H2A, thereby playing a central role in histone code and gene regulation. H2A 'Lys-118' ubiquitination gives a specific tag for epigenetic transcriptional repression. Polycomb group (PcG) protein. PcG proteins act by forming multiprotein complexes, which are required to maintain the transcriptionally repressive state of homeotic genes throughout development. PcG proteins are not required to initiate repression, but to maintain it during later stages of development. PcG complexes act via modification of histones, such as methylation, deacetylation, ubiquitination rendering chromatin heritably changed in its expressibility. May play a role in meiotic sister chromatid cohesion. This chain is E3 ubiquitin-protein ligase RING1 (Sce), found in Drosophila melanogaster (Fruit fly).